The chain runs to 516 residues: 2,3-bisphosphoglycerate-independent phosphoglycerate mutase (516 aa).

The Mn(2+) site is built by Asp14 and Ser64. Residue Ser64 is the Phosphoserine intermediate of the active site. Substrate contacts are provided by residues His125, 155 to 156 (RD), Arg187, Arg193, 263 to 266 (RPDR), and Lys337. Mn(2+) is bound by residues Asp404, His408, Asp445, His446, and His464.

The protein belongs to the BPG-independent phosphoglycerate mutase family. In terms of assembly, monomer. Requires Mn(2+) as cofactor.

It catalyses the reaction (2R)-2-phosphoglycerate = (2R)-3-phosphoglycerate. Its pathway is carbohydrate degradation; glycolysis; pyruvate from D-glyceraldehyde 3-phosphate: step 3/5. Catalyzes the interconversion of 2-phosphoglycerate and 3-phosphoglycerate. The polypeptide is 2,3-bisphosphoglycerate-independent phosphoglycerate mutase (Saccharophagus degradans (strain 2-40 / ATCC 43961 / DSM 17024)).